The primary structure comprises 482 residues: Wax ester synthase/diacylglycerol acyltransferase 9 (482 aa).

Topologically, residues 1–195 are cytoplasmic; it reads MEKKMKEEEE…FRLVLVVCST (195 aa). Catalysis depends on H140, which acts as the Proton acceptor. A helical membrane pass occupies residues 196–216; that stretch reads VRLIWNTLVDSFLCMATIFFL. Residues 217–328 are Lumenal-facing; the sequence is KDTDTPLKGK…AKGSKCRWGN (112 aa). A helical membrane pass occupies residues 329–349; it reads YISVILFPFTIALQSDPLVYL. Topologically, residues 350–366 are cytoplasmic; that stretch reads SNVKSMIDRKKNSLITY. A helical membrane pass occupies residues 367–387; the sequence is IIYTFSEFVIKAFGINVAVAF. Topologically, residues 388-482 are lumenal; sequence QRKIMLNTTM…LEKGLPNHVN (95 aa). N394 is a glycosylation site (N-linked (GlcNAc...) asparagine).

It in the N-terminal section; belongs to the long-chain O-acyltransferase family. In terms of tissue distribution, mostly expressed in stems and siliques.

It localises to the cell membrane. The protein resides in the endoplasmic reticulum membrane. It catalyses the reaction an acyl-CoA + a 1,2-diacyl-sn-glycerol = a triacyl-sn-glycerol + CoA. The catalysed reaction is a long chain fatty alcohol + a fatty acyl-CoA = a wax ester + CoA. It functions in the pathway glycerolipid metabolism; triacylglycerol biosynthesis. It participates in lipid metabolism. In terms of biological role, bifunctional wax ester synthase/diacylglycerol acyltransferase. Involved in cuticular wax biosynthesis. The sequence is that of Wax ester synthase/diacylglycerol acyltransferase 9 from Arabidopsis thaliana (Mouse-ear cress).